The sequence spans 202 residues: MPAADFVYLASQSPRRAQLLEQLGVRYQRLAPAPDEDTEALEAVLGKESPVAYVKRVTRLKLDAASERAKRQGLAPAPILCSDTTVALGRSILGKPANAAEATRMLRQLSGATHRVLTAVAVQQGRRRIEALSISRVTFAPMTAAQISSYVASGEPMGKAGAYAVQGRVAMYISHISGSYSGIMGLPLHETAWLLRAAGLKI.

Residue aspartate 83 is the Proton acceptor of the active site.

The protein belongs to the Maf family. YhdE subfamily. A divalent metal cation serves as cofactor.

It is found in the cytoplasm. It carries out the reaction dTTP + H2O = dTMP + diphosphate + H(+). The catalysed reaction is UTP + H2O = UMP + diphosphate + H(+). Its function is as follows. Nucleoside triphosphate pyrophosphatase that hydrolyzes dTTP and UTP. May have a dual role in cell division arrest and in preventing the incorporation of modified nucleotides into cellular nucleic acids. In Polaromonas sp. (strain JS666 / ATCC BAA-500), this protein is dTTP/UTP pyrophosphatase.